The following is a 306-amino-acid chain: Ribonuclease Z (306 aa).

Zn(2+) contacts are provided by histidine 63, histidine 65, aspartate 67, histidine 68, histidine 140, aspartate 211, and histidine 269. Residue aspartate 67 is the Proton acceptor of the active site.

This sequence belongs to the RNase Z family. In terms of assembly, homodimer. It depends on Zn(2+) as a cofactor.

The enzyme catalyses Endonucleolytic cleavage of RNA, removing extra 3' nucleotides from tRNA precursor, generating 3' termini of tRNAs. A 3'-hydroxy group is left at the tRNA terminus and a 5'-phosphoryl group is left at the trailer molecule.. Functionally, zinc phosphodiesterase, which displays some tRNA 3'-processing endonuclease activity. Probably involved in tRNA maturation, by removing a 3'-trailer from precursor tRNA. The sequence is that of Ribonuclease Z from Listeria monocytogenes serotype 4a (strain HCC23).